The sequence spans 701 residues: Polyribonucleotide nucleotidyltransferase (701 aa).

D487 and D493 together coordinate Mg(2+). A KH domain is found at 554 to 613; that stretch reads PTMIAMKIDTDKIRDVIGKGGATIRAICEETKASIDIEDDGSIKIFGESKEAAEAARQRV. Positions 623 to 691 constitute an S1 motif domain; that stretch reads GKIYLGKVER…NRGRIKLSIK (69 aa).

Belongs to the polyribonucleotide nucleotidyltransferase family. In terms of assembly, component of the RNA degradosome, which is a multiprotein complex involved in RNA processing and mRNA degradation. It depends on Mg(2+) as a cofactor.

The protein localises to the cytoplasm. The catalysed reaction is RNA(n+1) + phosphate = RNA(n) + a ribonucleoside 5'-diphosphate. Its function is as follows. Involved in mRNA degradation. Catalyzes the phosphorolysis of single-stranded polyribonucleotides processively in the 3'- to 5'-direction. This is Polyribonucleotide nucleotidyltransferase from Pseudomonas syringae pv. tomato (strain ATCC BAA-871 / DC3000).